A 240-amino-acid chain; its full sequence is HTH-type transcriptional regulator Mce2R (240 aa).

The region spanning 9 to 77 (RSVPEEVFEQ…QGDVTTVRDF (69 aa)) is the HTH gntR-type domain. Positions 37–56 (ERRLAELLGVSRPAVREALK) form a DNA-binding region, H-T-H motif.

Negatively regulates the expression of its operon as well as expression of end (endonuclease 4). In Mycobacterium tuberculosis (strain CDC 1551 / Oshkosh), this protein is HTH-type transcriptional regulator Mce2R (mce2R).